We begin with the raw amino-acid sequence, 343 residues long: Ubiquitin thioesterase OTU1 (343 aa).

A UBX-like region spans residues 45–123 (RCKAKGGTHV…IVEEDQTRPK (79 aa)). Residues 144–269 (LTRTAVPADN…GIHYDPLQRN (126 aa)) enclose the OTU domain. A cys-loop region spans residues 149–155 (VPADNSC). The active site involves Asp-152. Cys-155 (nucleophile) is an active-site residue. The interval 208 to 218 (IRRDDTWGGAI) is variable-loop. The his-loop stretch occupies residues 258–262 (YDGIH). Ile-261 provides a ligand contact to substrate. His-262 is an active-site residue. Residues 286-291 (DIVLVQ) are S2 site. Residues 313–337 (LRCMLCQKGLTGQAEARDHARETGH) form a C2H2-type zinc finger. Residue His-337 is part of the active site.

In terms of assembly, interacts with VCP; the interaction is direct. Interacts with FAF2/UBXD8. Interacts with DERL1; however interaction is dependent on the UBAX-like region, suggesting that it may be indirect. Interacts with PLAA, UBXN6 and VCP; may form a complex involved in macroautophagy.

Its subcellular location is the cytoplasm. It catalyses the reaction Thiol-dependent hydrolysis of ester, thioester, amide, peptide and isopeptide bonds formed by the C-terminal Gly of ubiquitin (a 76-residue protein attached to proteins as an intracellular targeting signal).. Its function is as follows. Hydrolase that can remove conjugated ubiquitin from proteins and participates in endoplasmic reticulum-associated degradation (ERAD) for misfolded lumenal proteins. May act by triming the ubiquitin chain on the associated substrate to facilitate their threading through the VCP/p97 pore. Ubiquitin moieties on substrates may present a steric impediment to the threading process when the substrate is transferred to the VCP pore and threaded through VCP's axial channel. Mediates deubiquitination of 'Lys-27'-, 'Lys-29'- and 'Lys-33'-linked polyubiquitin chains. Also able to hydrolyze 'Lys-11'-linked ubiquitin chains. Cleaves both polyubiquitin and di-ubiquitin. May play a role in macroautophagy, regulating for instance the clearance of damaged lysosomes. May recruit PLAA, UBXN6 and VCP to damaged lysosome membranes decorated with K48-linked ubiquitin chains and remove these chains allowing autophagosome formation. The protein is Ubiquitin thioesterase OTU1 (Yod1) of Rattus norvegicus (Rat).